The sequence spans 72 residues: Translational regulator CsrA (72 aa).

The protein belongs to the CsrA/RsmA family. In terms of assembly, homodimer; the beta-strands of each monomer intercalate to form a hydrophobic core, while the alpha-helices form wings that extend away from the core.

The protein localises to the cytoplasm. Its function is as follows. A translational regulator that binds mRNA to regulate translation initiation and/or mRNA stability. Usually binds in the 5'-UTR at or near the Shine-Dalgarno sequence preventing ribosome-binding, thus repressing translation. Its main target seems to be the major flagellin gene, while its function is anatagonized by FliW. This chain is Translational regulator CsrA, found in Lachnoclostridium phytofermentans (strain ATCC 700394 / DSM 18823 / ISDg) (Clostridium phytofermentans).